A 435-amino-acid polypeptide reads, in one-letter code: Methionine aminopeptidase 2 (435 aa).

Positions 57 to 77 (AIDGDQAAAKKKKSKKKKKKA) are disordered. The segment covering 65 to 77 (AKKKKSKKKKKKA) has biased composition (basic residues). Substrate is bound at residue His188. A divalent metal cation contacts are provided by Asp208, Asp219, and His288. His296 is a substrate binding site. Positions 321 and 416 each coordinate a divalent metal cation.

Belongs to the peptidase M24A family. Methionine aminopeptidase eukaryotic type 2 subfamily. Co(2+) is required as a cofactor. The cofactor is Zn(2+). Requires Mn(2+) as cofactor. Fe(2+) serves as cofactor.

It is found in the cytoplasm. The catalysed reaction is Release of N-terminal amino acids, preferentially methionine, from peptides and arylamides.. Cotranslationally removes the N-terminal methionine from nascent proteins. The N-terminal methionine is often cleaved when the second residue in the primary sequence is small and uncharged (Met-Ala-, Cys, Gly, Pro, Ser, Thr, or Val). This chain is Methionine aminopeptidase 2, found in Clavispora lusitaniae (strain ATCC 42720) (Yeast).